Consider the following 374-residue polypeptide: Ribosomal RNA large subunit methyltransferase G (374 aa).

This sequence belongs to the methyltransferase superfamily. RlmG family.

It localises to the cytoplasm. The enzyme catalyses guanosine(1835) in 23S rRNA + S-adenosyl-L-methionine = N(2)-methylguanosine(1835) in 23S rRNA + S-adenosyl-L-homocysteine + H(+). In terms of biological role, specifically methylates the guanine in position 1835 (m2G1835) of 23S rRNA. This Photobacterium profundum (strain SS9) protein is Ribosomal RNA large subunit methyltransferase G.